The following is a 363-amino-acid chain: uncharacterized protein (363 aa).

S-adenosyl-L-methionine is bound by residues Gln-198, Tyr-225, Glu-246, and Asp-291. Residue Cys-318 is the Nucleophile of the active site.

It belongs to the class I-like SAM-binding methyltransferase superfamily. RNA M5U methyltransferase family.

This is an uncharacterized protein from Mycoplasma mobile (strain ATCC 43663 / 163K / NCTC 11711) (Mesomycoplasma mobile).